Consider the following 40-residue polypeptide: Dolichyl-diphosphooligosaccharide--protein glycosyltransferase subunit 4 (40 aa).

Residues 1 to 4 (MITD) are Lumenal-facing. Residues 5-25 (VQLAIFSNVLGVFLFLLVVAY) traverse the membrane as a helical segment. Topologically, residues 26–40 (HYINANTGKSSIKNK) are cytoplasmic.

Belongs to the OST4 family. As to quaternary structure, component of the oligosaccharyltransferase (OST) complex.

It localises to the endoplasmic reticulum membrane. Functionally, subunit of the oligosaccharyl transferase (OST) complex that catalyzes the initial transfer of a defined glycan (Glc(3)Man(9)GlcNAc(2) in eukaryotes) from the lipid carrier dolichol-pyrophosphate to an asparagine residue within an Asn-X-Ser/Thr consensus motif in nascent polypeptide chains, the first step in protein N-glycosylation. N-glycosylation occurs cotranslationally and the complex associates with the Sec61 complex at the channel-forming translocon complex that mediates protein translocation across the endoplasmic reticulum (ER). All subunits are required for a maximal enzyme activity. This Drosophila mojavensis (Fruit fly) protein is Dolichyl-diphosphooligosaccharide--protein glycosyltransferase subunit 4.